Here is a 201-residue protein sequence, read N- to C-terminus: MSRYRGPRFKKIRRLGALPGLTSKRPTPGSDLRNQSRSGKRSQYRIRLEEKQKLRFHYGLTERQLLKYVRIAGKAKGSTGQVLLQLLEMRLDNILFRLGMASTIPGARQLVNHRHILVNGRIVDIPSYRCKPRDIITTRDEQKSRALIQNYLDSSPHEELPKHLTLHSSQYKGLVNQIIDSKWVGLKINELLVVEYYSRQT.

A disordered region spans residues 15 to 43 (LGALPGLTSKRPTPGSDLRNQSRSGKRSQ). One can recognise an S4 RNA-binding domain in the interval 89 to 149 (MRLDNILFRL…DEQKSRALIQ (61 aa)).

Belongs to the universal ribosomal protein uS4 family. Part of the 30S ribosomal subunit. Contacts protein S5. The interaction surface between S4 and S5 is involved in control of translational fidelity.

It localises to the plastid. It is found in the chloroplast. In terms of biological role, one of the primary rRNA binding proteins, it binds directly to 16S rRNA where it nucleates assembly of the body of the 30S subunit. With S5 and S12 plays an important role in translational accuracy. This chain is Small ribosomal subunit protein uS4c (rps4), found in Nandina domestica (Heavenly bamboo).